We begin with the raw amino-acid sequence, 261 residues long: Probable RNA-binding protein ARP1 (261 aa).

In terms of domain architecture, RRM spans 17 to 94; that stretch reads TKVFVGGLAW…RRANCNLASL (78 aa). Positions 96-122 are disordered; sequence GRLRKSPTMTSPQQGPKNGNRATPPHV. Over residues 102–116 the composition is skewed to polar residues; the sequence is PTMTSPQQGPKNGNR.

As to expression, expressed in vasculature of leaves, roots and siliques.

Its subcellular location is the nucleus. Functionally, probable RNA-binding protein involved in the regulation of abscisic acid (ABA) response during seed germination. May regulate transcript levels of several germination-responsive genes under ABA. This is Probable RNA-binding protein ARP1 from Arabidopsis thaliana (Mouse-ear cress).